A 371-amino-acid polypeptide reads, in one-letter code: MENAMETKHSNRARSRKGALRGAVLAGALMALVGCQTSPAATTSSNTGGTNMQLQLTQEWDKTFPLSAKVEHRKVTFANRYGITLAADLYLPKNRGGDRLPAIVIGGPFGAVKEQSSGLYAQTMAERGFVTLAFDPSYTGESGGQPRNVASPDINTEDFSAAVDFISLLPEVNRERIGVIGICGWGGMALNAVAVDKRVKAVVTSTMYDMTRVMSKGYNDSVTLEQRTRTLEQLGQQRWKDAESGTPAYQPPYNELKGGEAQFLVDYHDYYMTPRGYHPRAVNSGNAWTMTTPLSFMNMPILTYIKEISPRPILLIHGERAHSRYFSETAYAAAAEPKELLIVPGASHVDLYDRLDRIPFDRIAGFFDEHL.

It to E.coli YcjY.

This is an uncharacterized protein from Pseudomonas aeruginosa (strain ATCC 15692 / DSM 22644 / CIP 104116 / JCM 14847 / LMG 12228 / 1C / PRS 101 / PAO1).